A 295-amino-acid polypeptide reads, in one-letter code: Ribosomal protein L11 methyltransferase (295 aa).

S-adenosyl-L-methionine contacts are provided by Thr-145, Gly-166, Asp-188, and Asn-230.

This sequence belongs to the methyltransferase superfamily. PrmA family.

It is found in the cytoplasm. It catalyses the reaction L-lysyl-[protein] + 3 S-adenosyl-L-methionine = N(6),N(6),N(6)-trimethyl-L-lysyl-[protein] + 3 S-adenosyl-L-homocysteine + 3 H(+). Functionally, methylates ribosomal protein L11. In Pectobacterium atrosepticum (strain SCRI 1043 / ATCC BAA-672) (Erwinia carotovora subsp. atroseptica), this protein is Ribosomal protein L11 methyltransferase.